Reading from the N-terminus, the 542-residue chain is Homeobox protein ceh-18 (542 aa).

The span at 243–252 (NTPTQPTASL) shows a compositional bias: polar residues. The tract at residues 243 to 264 (NTPTQPTASLTPKKAENRPPVV) is disordered. A POU-specific domain is found at 290-364 (DDRIDMNELE…LLKEWLADVE (75 aa)). Positions 421-480 (RRRKRTNLDMNQRNALDTFFALNPRPDHDKMTDIANSLELDRDVVRVWFCNRRQKMRRVD) form a DNA-binding region, homeobox. Positions 514–542 (LASCQASNDDSDGTSGSPDAPSNDGCSDL) are disordered. Positions 517 to 530 (CQASNDDSDGTSGS) are enriched in polar residues.

The protein belongs to the POU transcription factor family. As to quaternary structure, interacts with akir-1. As to expression, expressed in the gonadal sheath cells that signal the oocyte, but not in the oocyte.

It localises to the nucleus. In terms of biological role, directs gonadal sheath cell differentiation and function. Also directs gonad migration and plays a role in specifying the differentiated phenotypes of epidermal cells during postembryonic development. Plays a role in oogenesis, regulating a sheath cell signal that causes oocytes to maintain diakinesis arrest during meiosis. Negatively regulates oocyte maturation, ovulation and MAPK activation in oocytes when sperm are not available for fertilization. May be recruited by akir-1 to the promoter regions of antimicrobial peptide genes to control gene expression in response to fungal infection. This chain is Homeobox protein ceh-18, found in Caenorhabditis elegans.